We begin with the raw amino-acid sequence, 332 residues long: Ferredoxin--NADP reductase 2 (332 aa).

Residues Asp-33, Gln-41, Tyr-46, Val-86, Ile-121, Asp-282, and Ser-325 each coordinate FAD.

This sequence belongs to the ferredoxin--NADP reductase type 2 family. Homodimer. The cofactor is FAD.

It catalyses the reaction 2 reduced [2Fe-2S]-[ferredoxin] + NADP(+) + H(+) = 2 oxidized [2Fe-2S]-[ferredoxin] + NADPH. This chain is Ferredoxin--NADP reductase 2, found in Sulfolobus acidocaldarius (strain ATCC 33909 / DSM 639 / JCM 8929 / NBRC 15157 / NCIMB 11770).